The sequence spans 563 residues: IQCJ-SCHIP1 readthrough transcript protein (563 aa).

The IQ domain maps to 47–67 (ESKVKIIQRAWREYLQRQEPL). Disordered regions lie at residues 63-150 (RQEP…VSAL), 164-295 (VIDE…EPPV), 312-336 (FREQEVRNQGQARTNSTSAQKNERE), and 384-430 (SGSD…SLDD). Over residues 76-87 (SVSSEKLSSSVS) the composition is skewed to low complexity. Over residues 88 to 97 (MNTFSDSSTP) the composition is skewed to polar residues. A compositionally biased stretch (low complexity) spans 108–143 (SDAGSSSSSSRASSQSNSTKVTPCSECKSSSSPGGS). The span at 168–182 (WAPEEDGEEEEEEDE) shows a compositional bias: acidic residues. Basic and acidic residues-rich tracts occupy residues 183–199 (RDQRGYRDDRSPAREPG) and 229–238 (HQHDPQDLRH). Ser-193 is modified (phosphoserine). Residues 318–331 (RNQGQARTNSTSAQ) are compositionally biased toward polar residues. The segment covering 385–399 (GSDKDSDADDSKTET) has biased composition (basic and acidic residues). Residues 400-411 (SLDTPLSPMSKQ) are compositionally biased toward polar residues. Residues 419–563 (DTTEEESESL…KHMAEKMPAK (145 aa)) are required for interaction with ankyrins. Over residues 420-430 (TTEEESESLDD) the composition is skewed to acidic residues. The stretch at 500 to 534 (IGQLQVIVNDLHSQIESLNEELVQLLLIRDELHTE) forms a coiled coil.

As to quaternary structure, homooligomer (via coiled coil domain). Interacts (via IQ domain) with calmodulin; the interaction is direct and lost in presence of calcium. Interacts with ANK3 (via ANK repeats); required for localization at axon initial segments (AIS) and nodes of Ranvier. Interacts with SPTBN4. Interacts with KCNQ2 and KCNQ3. In terms of tissue distribution, highly expressed in brain and to a lower extent in heart and kidney.

It is found in the cell projection. Its subcellular location is the axon. The protein resides in the cytoplasm. In terms of biological role, may play a role in action potential conduction in myelinated cells through the organization of molecular complexes at nodes of Ranvier and axon initial segments. May also play a role in axon outgrowth and guidance. This Homo sapiens (Human) protein is IQCJ-SCHIP1 readthrough transcript protein.